We begin with the raw amino-acid sequence, 72 residues long: Translation initiation factor IF-1 (72 aa).

The S1-like domain occupies 1–72 (MSKEDVIEMQ…TRGRITWRAK (72 aa)).

The protein belongs to the IF-1 family. As to quaternary structure, component of the 30S ribosomal translation pre-initiation complex which assembles on the 30S ribosome in the order IF-2 and IF-3, IF-1 and N-formylmethionyl-tRNA(fMet); mRNA recruitment can occur at any time during PIC assembly.

The protein localises to the cytoplasm. Functionally, one of the essential components for the initiation of protein synthesis. Stabilizes the binding of IF-2 and IF-3 on the 30S subunit to which N-formylmethionyl-tRNA(fMet) subsequently binds. Helps modulate mRNA selection, yielding the 30S pre-initiation complex (PIC). Upon addition of the 50S ribosomal subunit IF-1, IF-2 and IF-3 are released leaving the mature 70S translation initiation complex. In Clostridium acetobutylicum (strain ATCC 824 / DSM 792 / JCM 1419 / IAM 19013 / LMG 5710 / NBRC 13948 / NRRL B-527 / VKM B-1787 / 2291 / W), this protein is Translation initiation factor IF-1.